The chain runs to 186 residues: Protein MTH_152 (186 aa).

The protein belongs to the flavoredoxin family. As to quaternary structure, homodimer. FMN serves as cofactor.

In Methanothermobacter thermautotrophicus (strain ATCC 29096 / DSM 1053 / JCM 10044 / NBRC 100330 / Delta H) (Methanobacterium thermoautotrophicum), this protein is Protein MTH_152.